The primary structure comprises 699 residues: Conditioned medium factor (699 aa).

Residues 1 to 18 (MRLLLLLILIITINFSYG) form the signal peptide. N-linked (GlcNAc...) asparagine glycosylation is found at asparagine 130, asparagine 283, asparagine 346, and asparagine 430. The segment at 680 to 699 (SPQQTTNTEYNKEMSSNSVW) is disordered.

In terms of processing, N- and O-glycosylated. Post-translationally, the N-terminus is blocked.

Its function is as follows. Involved in cell density sensing and might synchronize the onset of development by triggering aggregation when a majority of the cells in a given area have starved. In Dictyostelium discoideum (Social amoeba), this protein is Conditioned medium factor (cmfA).